A 388-amino-acid polypeptide reads, in one-letter code: Succinate--CoA ligase [ADP-forming] subunit beta (388 aa).

In terms of domain architecture, ATP-grasp spans 9-244 (KGVLSSFGVT…PDEYAAEELE (236 aa)). ATP is bound by residues Lys-46, 53–55 (GRG), Glu-99, Val-102, and Glu-107. Residues Asn-199 and Asp-213 each coordinate Mg(2+). Residues Asn-264 and 320 to 322 (GIM) contribute to the substrate site.

Belongs to the succinate/malate CoA ligase beta subunit family. As to quaternary structure, heterotetramer of two alpha and two beta subunits. It depends on Mg(2+) as a cofactor.

It catalyses the reaction succinate + ATP + CoA = succinyl-CoA + ADP + phosphate. The catalysed reaction is GTP + succinate + CoA = succinyl-CoA + GDP + phosphate. The protein operates within carbohydrate metabolism; tricarboxylic acid cycle; succinate from succinyl-CoA (ligase route): step 1/1. Its function is as follows. Succinyl-CoA synthetase functions in the citric acid cycle (TCA), coupling the hydrolysis of succinyl-CoA to the synthesis of either ATP or GTP and thus represents the only step of substrate-level phosphorylation in the TCA. The beta subunit provides nucleotide specificity of the enzyme and binds the substrate succinate, while the binding sites for coenzyme A and phosphate are found in the alpha subunit. The polypeptide is Succinate--CoA ligase [ADP-forming] subunit beta (Anaplasma marginale (strain St. Maries)).